The following is a 187-amino-acid chain: Large ribosomal subunit protein bL25 (187 aa).

The protein belongs to the bacterial ribosomal protein bL25 family. CTC subfamily. In terms of assembly, part of the 50S ribosomal subunit; part of the 5S rRNA/L5/L18/L25 subcomplex. Contacts the 5S rRNA. Binds to the 5S rRNA independently of L5 and L18.

This is one of the proteins that binds to the 5S RNA in the ribosome where it forms part of the central protuberance. The protein is Large ribosomal subunit protein bL25 of Tropheryma whipplei (strain TW08/27) (Whipple's bacillus).